We begin with the raw amino-acid sequence, 433 residues long: Enolase (433 aa).

A (2R)-2-phosphoglycerate-binding site is contributed by Gln166. The Proton donor role is filled by Glu208. Mg(2+) is bound by residues Asp245, Glu289, and Asp316. Residues Lys341, Arg370, Ser371, and Lys392 each coordinate (2R)-2-phosphoglycerate. The Proton acceptor role is filled by Lys341.

Belongs to the enolase family. Mg(2+) serves as cofactor.

It localises to the cytoplasm. The protein localises to the secreted. The protein resides in the cell surface. It carries out the reaction (2R)-2-phosphoglycerate = phosphoenolpyruvate + H2O. It participates in carbohydrate degradation; glycolysis; pyruvate from D-glyceraldehyde 3-phosphate: step 4/5. Its function is as follows. Catalyzes the reversible conversion of 2-phosphoglycerate (2-PG) into phosphoenolpyruvate (PEP). It is essential for the degradation of carbohydrates via glycolysis. This Acetivibrio thermocellus (strain ATCC 27405 / DSM 1237 / JCM 9322 / NBRC 103400 / NCIMB 10682 / NRRL B-4536 / VPI 7372) (Clostridium thermocellum) protein is Enolase.